A 349-amino-acid polypeptide reads, in one-letter code: Glycerol-3-phosphate dehydrogenase [NAD(+)], cytoplasmic (349 aa).

An NAD(+)-binding site is contributed by 10–15 (GSGNWG). Lysine 120 serves as a coordination point for substrate. Position 153 (alanine 153) interacts with NAD(+). Position 154 is a phosphoserine (serine 154). The active-site Proton acceptor is the lysine 204. Arginine 269 contributes to the NAD(+) binding site. Residue 269 to 270 (RN) coordinates substrate. Residue lysine 289 is modified to N6-succinyllysine. The NAD(+) site is built by lysine 296 and glutamine 298. Tyrosine 326 bears the Phosphotyrosine mark.

It belongs to the NAD-dependent glycerol-3-phosphate dehydrogenase family. In terms of assembly, homodimer.

The protein resides in the cytoplasm. The enzyme catalyses sn-glycerol 3-phosphate + NAD(+) = dihydroxyacetone phosphate + NADH + H(+). Functionally, has glycerol-3-phosphate dehydrogenase activity. The chain is Glycerol-3-phosphate dehydrogenase [NAD(+)], cytoplasmic from Rattus norvegicus (Rat).